The primary structure comprises 299 residues: MDPAGNPATGTARVKRGMAEMLKGGVIMDVVTPEQARIAEGAGAVAVMALERVPADIRAQGGVSRMSDPDMIEGIIAAVTIPVMAKVRIGHFVEAQILQTLGVDYIDESEVLTPADYAHHIDKWNFTVPFVCGATNLGEALRRISEGAAMIRSKGEAGTGDVSNATTHMRAIGGEIRRLTSMSEDELFVAAKELQAPYELVAEVARAGKLPVTLFTAGGIATPADAAMMMQLGAEGVFVGSGIFKSGAPEHRAAAIVKATTFFDDPDVLAKVSRGLGEAMVGINVDEIAVGHRLAQRGW.

D29 provides a ligand contact to D-ribose 5-phosphate. The active-site Schiff-base intermediate with D-ribose 5-phosphate is the K86. G158 provides a ligand contact to D-ribose 5-phosphate. Position 170 (R170) interacts with D-glyceraldehyde 3-phosphate. D-ribose 5-phosphate is bound by residues G219 and 240-241 (GS).

It belongs to the PdxS/SNZ family. In terms of assembly, in the presence of PdxT, forms a dodecamer of heterodimers.

It catalyses the reaction aldehydo-D-ribose 5-phosphate + D-glyceraldehyde 3-phosphate + L-glutamine = pyridoxal 5'-phosphate + L-glutamate + phosphate + 3 H2O + H(+). It participates in cofactor biosynthesis; pyridoxal 5'-phosphate biosynthesis. Catalyzes the formation of pyridoxal 5'-phosphate from ribose 5-phosphate (RBP), glyceraldehyde 3-phosphate (G3P) and ammonia. The ammonia is provided by the PdxT subunit. Can also use ribulose 5-phosphate and dihydroxyacetone phosphate as substrates, resulting from enzyme-catalyzed isomerization of RBP and G3P, respectively. The polypeptide is Pyridoxal 5'-phosphate synthase subunit PdxS (Mycobacterium bovis (strain ATCC BAA-935 / AF2122/97)).